The following is a 633-amino-acid chain: Basic helix-loop-helix ARNT-like protein 1 (633 aa).

The disordered stretch occupies residues 1–65 (MADQRMDISS…GMDTDKDDQH (65 aa)). A Phosphoserine; by GSK3-beta modification is found at S17. The span at 24-33 (ISSSLSTSGV) shows a compositional bias: polar residues. A Nuclear localization signal motif is present at residues 36–41 (NRKRKG). Positions 79–132 (NAREAHSQIEKRRRDKMNSFIDELASLVPTCNAMSRKLDKLTVLRMAVQHMKTL) constitute a bHLH domain. S85 bears the Phosphoserine mark. At S97 the chain carries Phosphoserine; by CK2. A Nuclear export signal 1 motif is present at residues 149 to 159 (LSDDELKHLIL). Residues 150–222 (SDDELKHLIL…EQLSSSDTAP (73 aa)) form the PAS 1 domain. A Glycyl lysine isopeptide (Lys-Gly) (interchain with G-Cter in SUMO2 and SUMO3) cross-link involves residue K259. A Glycyl lysine isopeptide (Lys-Gly) (interchain with G-Cter in SUMO) cross-link involves residue K266. Residues 333–403 (PQPVNGEIRV…ECHRQVLQTR (71 aa)) enclose the PAS 2 domain. The Nuclear export signal 2 motif lies at 368-376 (LAYLPQELL). Positions 408–451 (TNCYKFKIKDGSFITLRSRWFSFMNPWTKEVEYIVSTNTVVSTS) constitute a PAC domain. 2 disordered regions span residues 469-499 (SMDS…RAGA) and 518-578 (GSSP…DNSS). The segment covering 518–528 (GSSPSSCGSSP) has biased composition (low complexity). Position 545 is an N6-acetyllysine (K545). Over residues 563–578 (GQIQDSSGYPYSDNSS) the composition is skewed to polar residues.

As to quaternary structure, component of the circadian clock oscillator which includes the CRY1/2 proteins, CLOCK or NPAS2, BMAL1 or BMAL2, CSNK1D and/or CSNK1E, TIMELESS and the PER1/2/3 proteins. Forms a heterodimer with CLOCK. The CLOCK-BMAL1 heterodimer is required for E-box-dependent transactivation, for CLOCK nuclear translocation and degradation, and, for phosphorylation of both CLOCK and BMAL1. Interacts with PER1, PER2, CRY1 and CRY2 and this interaction requires a translocation to the nucleus. Interaction of the CLOCK-BMAL1 heterodimer with PER or CRY inhibits transcription activation. Interacts with NPAS2. Ubiquitinated, leading to its proteasomal degradation. Deubiquitinated by USP9X. Post-translationally, O-glycosylated; contains O-GlcNAc. O-glycosylation by OGT prevents protein degradation by inhibiting ubiquitination. It also stabilizes the CLOCK-BMAL1 heterodimer thereby increasing CLOCK-BMAL1-mediated transcription of genes in the negative loop of the circadian clock such as PER1/2/3 and CRY1/2. In terms of processing, acetylated on Lys-545 by CLOCK during the repression phase of the circadian cycle. Acetylation facilitates recruitment of CRY1 protein and initiates the repression phase of the circadian cycle. Acetylated at Lys-545 by KAT5 during the activation phase of the cycle, leading to recruitment of the positive transcription elongation factor b (P-TEFb) and BRD4, followed by productive elongation of circadian transcripts. Deacetylated by SIRT1, which may result in decreased protein stability. Phosphorylated upon dimerization with CLOCK. Phosphorylation enhances the transcriptional activity, alters the subcellular localization and decreases the stability of the CLOCK-BMAL1 heterodimer by promoting its degradation. Phosphorylation shows circadian variations in the liver with a peak between CT10 to CT14. Phosphorylation at Ser-97 by CK2 is essential for its nuclear localization, its interaction with CLOCK and controls CLOCK nuclear entry. Dephosphorylation at Ser-85 is important for dimerization with CLOCK and transcriptional activity. Post-translationally, sumoylated on Lys-266 upon dimerization with CLOCK. Predominantly conjugated to poly-SUMO2/3 rather than SUMO1 and the level of these conjugates undergo rhythmic variation, peaking at CT9-CT12. Sumoylation localizes it exclusively to the PML body and promotes its ubiquitination in the PML body, ubiquitin-dependent proteasomal degradation and the transcriptional activity of the CLOCK-BMAL1 heterodimer. In terms of processing, undergoes lysosome-mediated degradation in a time-dependent manner in the liver. In terms of tissue distribution, expressed in pineal gland and retina.

The protein resides in the nucleus. It is found in the cytoplasm. It localises to the PML body. Transcriptional activator which forms a core component of the circadian clock. The circadian clock, an internal time-keeping system, regulates various physiological processes through the generation of approximately 24 hour circadian rhythms in gene expression, which are translated into rhythms in metabolism and behavior. It is derived from the Latin roots 'circa' (about) and 'diem' (day) and acts as an important regulator of a wide array of physiological functions including metabolism, sleep, body temperature, blood pressure, endocrine, immune, cardiovascular, and renal function. Consists of two major components: the central clock, residing in the suprachiasmatic nucleus (SCN) of the brain, and the peripheral clocks that are present in nearly every tissue and organ system. Both the central and peripheral clocks can be reset by environmental cues, also known as Zeitgebers (German for 'timegivers'). The predominant Zeitgeber for the central clock is light, which is sensed by retina and signals directly to the SCN. The central clock entrains the peripheral clocks through neuronal and hormonal signals, body temperature and feeding-related cues, aligning all clocks with the external light/dark cycle. Circadian rhythms allow an organism to achieve temporal homeostasis with its environment at the molecular level by regulating gene expression to create a peak of protein expression once every 24 hours to control when a particular physiological process is most active with respect to the solar day. Transcription and translation of core clock components (CLOCK, NPAS2, BMAL1, BMAL2, PER1, PER2, PER3, CRY1 and CRY2) plays a critical role in rhythm generation, whereas delays imposed by post-translational modifications (PTMs) are important for determining the period (tau) of the rhythms (tau refers to the period of a rhythm and is the length, in time, of one complete cycle). A diurnal rhythm is synchronized with the day/night cycle, while the ultradian and infradian rhythms have a period shorter and longer than 24 hours, respectively. Disruptions in the circadian rhythms contribute to the pathology of cardiovascular diseases, cancer, metabolic syndromes and aging. A transcription/translation feedback loop (TTFL) forms the core of the molecular circadian clock mechanism. Transcription factors, CLOCK or NPAS2 and BMAL1 or BMAL2, form the positive limb of the feedback loop, act in the form of a heterodimer and activate the transcription of core clock genes and clock-controlled genes (involved in key metabolic processes), harboring E-box elements (5'-CACGTG-3') within their promoters. The core clock genes: PER1/2/3 and CRY1/2 which are transcriptional repressors form the negative limb of the feedback loop and interact with the CLOCK|NPAS2-BMAL1|BMAL2 heterodimer inhibiting its activity and thereby negatively regulating their own expression. This heterodimer also activates nuclear receptors NR1D1/2 and RORA/B/G, which form a second feedback loop and which activate and repress BMAL1 transcription, respectively. The preferred binding motif for the CLOCK-BMAL1 heterodimer is 5'-CACGTGA-3', which contains a flanking adenine nucleotide at the 3-prime end of the canonical 6-nucleotide E-box sequence. CLOCK specifically binds to the half-site 5'-CAC-3', while BMAL1 binds to the half-site 5'-GTGA-3'. Essential for the rhythmic interaction of CLOCK with ASS1 and plays a critical role in positively regulating CLOCK-mediated acetylation of ASS1. Plays a role in protecting against lethal sepsis by limiting the expression of immune checkpoint protein CD274 in macrophages in a PKM2-dependent manner. In Gallus gallus (Chicken), this protein is Basic helix-loop-helix ARNT-like protein 1 (BMAL1).